The chain runs to 265 residues: C-type lectin domain family 12 member A (265 aa).

Over M1–A43 the chain is Cytoplasmic. The short motif at V5–L10 is the ITIM motif element. Residue Y7 is modified to Phosphotyrosine. A helical; Signal-anchor for type II membrane protein transmembrane segment spans residues L44–F64. The Extracellular portion of the chain corresponds to H65–A265. N-linked (GlcNAc...) asparagine glycans are attached at residues N88 and N98. 4 cysteine pairs are disulfide-bonded: C118–C130, C133–C144, C161–C248, and C227–C240. The region spanning H140–E249 is the C-type lectin domain. N165 is a glycosylation site (N-linked (GlcNAc...) asparagine).

In terms of assembly, homodimer; disulfide-linked. Interacts (when the ITIM motif is phosphorylated) with PTPN6 and PTPN11. In terms of processing, phosphorylated at Tyr-7 by SRC in the ITIM motif following ligand-binding, promoting recruitment of tyrosine-protein phosphatases PTPN6 and PTPN11. Post-translationally, highly N-glycosylated; glycosylation varies between cell types. Preferentially expressed in lymphoid tissues and immune cells, including natural killer (NK) cells, T-cells, dendritic cells and monocytes or macrophages. Detected in spleen macrophage-rich red pulp and in lymph node (at protein level). Detected in peripheral blood leukocytes, dendritic cells, bone marrow, monocytes, mononuclear leukocytes and macrophages.

Its subcellular location is the cell membrane. Functionally, myeloid inhibitory C-type lectin receptor that acts as a negative regulator of myeloid cell activation. Myeloid cell inhibition is required to limit proinflammatory pathways and protect against excessive inflammation. Specifically recognizes and binds various structures, such as neutrophil extracellular traps (NETs) or monosodium urate crystals. Also acts as a pattern-recognition receptor for pathogen-associated molecules, such as plasmodium hemozoin or mycobacterial micolic acid. Ligand-binding induces phosphorylation of its ITIM motif, followed by recruitment of tyrosine-protein phosphatases PTPN6 and PTPN11, which counteract tyrosine-protein kinase SYK, thereby preventing myeloid cell activation. Acts as a pattern-recognition receptor for NETs in neutrophils: specifically recognizes DNA in NETs, leading to inhibit neutrophil activation and limit further NET formation. This regulation is essential for controlling key neutrophil responses and limit NET-mediated inflammatory conditions. Also recognizes dead cells by acting as a receptor for monosodium urate crystals, leading to down-regulate neutrophil activation. Binding to monosodium urate crystals also promotes the type I interferon response. Acts as an inhibitor of natural killer (NK) cell cytotoxicity. Also acts as an ihibitor of dendritic cell maturation in an IL10-dependent manner. The chain is C-type lectin domain family 12 member A from Homo sapiens (Human).